The primary structure comprises 236 residues: Alpha-tubulin N-acetyltransferase (236 aa).

The region spanning 21–201 is the N-acetyltransferase domain; sequence ASVPDGVSRW…NKFVVFHGFF (181 aa). Acetyl-CoA is bound by residues 134–147 and 171–180; these read FYVD…GYGK and SDKLLGFMKK. Residues 217-236 are disordered; that stretch reads SPTGAAAAATGTKAKNEMPG. The span at 219–229 shows a compositional bias: low complexity; it reads TGAAAAATGTK.

This sequence belongs to the acetyltransferase ATAT1 family.

It catalyses the reaction L-lysyl-[alpha-tubulin] + acetyl-CoA = N(6)-acetyl-L-lysyl-[alpha-tubulin] + CoA + H(+). Functionally, specifically acetylates 'Lys-40' in alpha-tubulin on the lumenal side of microtubules. Promotes microtubule destabilization and accelerates microtubule dynamics; this activity may be independent of acetylation activity. Acetylates alpha-tubulin with a slow enzymatic rate, due to a catalytic site that is not optimized for acetyl transfer. Enters the microtubule through each end and diffuses quickly throughout the lumen of microtubules. Acetylates only long/old microtubules because of its slow acetylation rate since it does not have time to act on dynamically unstable microtubules before the enzyme is released. This is Alpha-tubulin N-acetyltransferase from Leishmania braziliensis.